Here is a 308-residue protein sequence, read N- to C-terminus: Aspartate carbamoyltransferase catalytic subunit (308 aa).

Carbamoyl phosphate contacts are provided by Arg49 and Thr50. An L-aspartate-binding site is contributed by Lys77. Carbamoyl phosphate contacts are provided by Arg99, His127, and Gln130. Arg160 and Arg211 together coordinate L-aspartate. Carbamoyl phosphate contacts are provided by Ala252 and Pro253.

It belongs to the aspartate/ornithine carbamoyltransferase superfamily. ATCase family. Heterododecamer (2C3:3R2) of six catalytic PyrB chains organized as two trimers (C3), and six regulatory PyrI chains organized as three dimers (R2).

It catalyses the reaction carbamoyl phosphate + L-aspartate = N-carbamoyl-L-aspartate + phosphate + H(+). The protein operates within pyrimidine metabolism; UMP biosynthesis via de novo pathway; (S)-dihydroorotate from bicarbonate: step 2/3. Functionally, catalyzes the condensation of carbamoyl phosphate and aspartate to form carbamoyl aspartate and inorganic phosphate, the committed step in the de novo pyrimidine nucleotide biosynthesis pathway. The sequence is that of Aspartate carbamoyltransferase catalytic subunit from Geobacillus kaustophilus (strain HTA426).